The following is a 599-amino-acid chain: Elongation factor 4 (599 aa).

In terms of domain architecture, tr-type G spans 4-186; that stretch reads KYIRNFSIIA…AIVEKVPPPK (183 aa). GTP is bound by residues 16 to 21 and 133 to 136; these read DHGKST and NKID.

This sequence belongs to the TRAFAC class translation factor GTPase superfamily. Classic translation factor GTPase family. LepA subfamily.

The protein resides in the cell inner membrane. The enzyme catalyses GTP + H2O = GDP + phosphate + H(+). Its function is as follows. Required for accurate and efficient protein synthesis under certain stress conditions. May act as a fidelity factor of the translation reaction, by catalyzing a one-codon backward translocation of tRNAs on improperly translocated ribosomes. Back-translocation proceeds from a post-translocation (POST) complex to a pre-translocation (PRE) complex, thus giving elongation factor G a second chance to translocate the tRNAs correctly. Binds to ribosomes in a GTP-dependent manner. The sequence is that of Elongation factor 4 from Bdellovibrio bacteriovorus (strain ATCC 15356 / DSM 50701 / NCIMB 9529 / HD100).